A 368-amino-acid polypeptide reads, in one-letter code: MSVAGLKKQFYKASQLVSEKVGGAEGTKLDDDFKDMEKKVDVTSKAVAEVLVRTIEYLQPNPASRAKLTMLNTVSKIRGQVKNPGYPQSEGLLGECMVRHGKELGGESNFGDALLDAGESMKRLAEVKDSLDIEVKQNFIDPLQNLCDKDLKEIQHHLKKLEGRRLDFDYKKKRQGKIPDEELRQALEKFEESKEVAETSMHNLLETDIEQVSQLSALVDAQLDYHRQAVQILEELADKLKRRVREASSRPKREFKPRPREPFELGELEQPNGGFPCAPAPKITASSSFRSSDKPIRMPSKSMPPLDQPSCKALYDFEPENDGELGFREGDLITLTNQIDENWYEGMLHGQSGFFPLSYVQVLVPLPQ.

Residues 1 to 21 (MSVAGLKKQFYKASQLVSEKV) are membrane-binding amphipathic helix. The region spanning 18-249 (SEKVGGAEGT…LKRRVREASS (232 aa)) is the BAR domain. The segment at 60 to 87 (PNPASRAKLTMLNTVSKIRGQVKNPGYP) is required for dimerization upon membrane association. The stretch at 180 to 250 (DEELRQALEK…KRRVREASSR (71 aa)) forms a coiled coil. The tract at residues 218–254 (LVDAQLDYHRQAVQILEELADKLKRRVREASSRPKRE) is interaction with ARC. Residues 244–307 (VREASSRPKR…MPSKSMPPLD (64 aa)) are disordered. Residues 245-263 (REASSRPKREFKPRPREPF) are compositionally biased toward basic and acidic residues. Ser-288 and Ser-292 each carry phosphoserine. Residues 306–365 (LDQPSCKALYDFEPENDGELGFREGDLITLTNQIDENWYEGMLHGQSGFFPLSYVQVLVP) enclose the SH3 domain. A Phosphotyrosine modification is found at Tyr-315.

This sequence belongs to the endophilin family. In terms of assembly, interacts with ARC, SYNJ1 and DNM1. Interacts with PDCD6IP. Interacts with BIN2.

The protein resides in the cytoplasm. Its subcellular location is the early endosome membrane. It is found in the cell projection. The protein localises to the podosome. Implicated in endocytosis. May recruit other proteins to membranes with high curvature. The sequence is that of Endophilin-A2 (Sh3gl1) from Mus musculus (Mouse).